The following is a 91-amino-acid chain: Small ribosomal subunit protein bS16 (91 aa).

Belongs to the bacterial ribosomal protein bS16 family.

In Levilactobacillus brevis (strain ATCC 367 / BCRC 12310 / CIP 105137 / JCM 1170 / LMG 11437 / NCIMB 947 / NCTC 947) (Lactobacillus brevis), this protein is Small ribosomal subunit protein bS16.